The chain runs to 281 residues: Large ribosomal subunit protein uL2 (281 aa).

The segment at 222–281 is disordered; the sequence is TVRGSVMNPNDHPHGGGEGRTPIGRKSPVTPWGKKALGVKTRNTKKPSEKLIVRKRNAKK.

The protein belongs to the universal ribosomal protein uL2 family. Part of the 50S ribosomal subunit. Forms a bridge to the 30S subunit in the 70S ribosome.

One of the primary rRNA binding proteins. Required for association of the 30S and 50S subunits to form the 70S ribosome, for tRNA binding and peptide bond formation. It has been suggested to have peptidyltransferase activity; this is somewhat controversial. Makes several contacts with the 16S rRNA in the 70S ribosome. This is Large ribosomal subunit protein uL2 from Mesoplasma florum (strain ATCC 33453 / NBRC 100688 / NCTC 11704 / L1) (Acholeplasma florum).